We begin with the raw amino-acid sequence, 189 residues long: Lipid A acyltransferase PagP (189 aa).

The signal sequence occupies residues 1–24 (MLRRFSLFSLGFLGWLLVSGNASA). Catalysis depends on residues H61, D104, and S105.

It belongs to the lipid A palmitoyltransferase family. In terms of assembly, homodimer.

Its subcellular location is the cell outer membrane. The enzyme catalyses a lipid A + a 1,2-diacyl-sn-glycero-3-phosphocholine = a hepta-acyl lipid A + a 2-acyl-sn-glycero-3-phosphocholine. It carries out the reaction a lipid IVA + a 1,2-diacyl-sn-glycero-3-phosphocholine = a lipid IVB + a 2-acyl-sn-glycero-3-phosphocholine. The catalysed reaction is a lipid IIA + a 1,2-diacyl-sn-glycero-3-phosphocholine = a lipid IIB + a 2-acyl-sn-glycero-3-phosphocholine. In terms of biological role, transfers a fatty acid residue from the sn-1 position of a phospholipid to the N-linked hydroxyfatty acid chain on the proximal unit of lipid A or its precursors. In Klebsiella pneumoniae subsp. pneumoniae (strain ATCC 700721 / MGH 78578), this protein is Lipid A acyltransferase PagP.